A 520-amino-acid chain; its full sequence is Bifunctional purine biosynthesis protein PurH (520 aa).

The MGS-like domain maps to 1–146 (MAPVALLSVS…KNHADVAVLT (146 aa)).

The protein belongs to the PurH family.

It catalyses the reaction (6R)-10-formyltetrahydrofolate + 5-amino-1-(5-phospho-beta-D-ribosyl)imidazole-4-carboxamide = 5-formamido-1-(5-phospho-D-ribosyl)imidazole-4-carboxamide + (6S)-5,6,7,8-tetrahydrofolate. It carries out the reaction IMP + H2O = 5-formamido-1-(5-phospho-D-ribosyl)imidazole-4-carboxamide. Its pathway is purine metabolism; IMP biosynthesis via de novo pathway; 5-formamido-1-(5-phospho-D-ribosyl)imidazole-4-carboxamide from 5-amino-1-(5-phospho-D-ribosyl)imidazole-4-carboxamide (10-formyl THF route): step 1/1. The protein operates within purine metabolism; IMP biosynthesis via de novo pathway; IMP from 5-formamido-1-(5-phospho-D-ribosyl)imidazole-4-carboxamide: step 1/1. The chain is Bifunctional purine biosynthesis protein PurH from Synechococcus sp. (strain CC9605).